A 249-amino-acid chain; its full sequence is MIKLVLLRHGESVWNKENRFTGWKDVDLTEKGVQEAKRAGEFMKKEGLDFDIAYTSVLKRAIRTLNLALNEMDLQWIPVNKTWRLNERHYGALQGLNKSETAEKFGEEQVLIWRRSYDTPPPALEKSDERYPGHDPRYKDLTEAELPLTECLKDTVERFLPYWHETIAPTIKSGKRVIIAAHGNSLRSLVKYLDNISDEDIVGLNIPTGMPLVYELDDDMKPIKNYYLGDPDDVAKAMASVANQGKAKA.

Substrate contacts are provided by residues 8-15, 21-22, Arg60, 87-90, Lys98, 114-115, and 183-184; these read RHGESVWN, TG, ERHY, RR, and GN. Residue His9 is the Tele-phosphohistidine intermediate of the active site. Glu87 acts as the Proton donor/acceptor in catalysis.

It belongs to the phosphoglycerate mutase family. BPG-dependent PGAM subfamily.

The enzyme catalyses (2R)-2-phosphoglycerate = (2R)-3-phosphoglycerate. It participates in carbohydrate degradation; glycolysis; pyruvate from D-glyceraldehyde 3-phosphate: step 3/5. Catalyzes the interconversion of 2-phosphoglycerate and 3-phosphoglycerate. This Chloroherpeton thalassium (strain ATCC 35110 / GB-78) protein is 2,3-bisphosphoglycerate-dependent phosphoglycerate mutase.